Reading from the N-terminus, the 262-residue chain is MQDKFIKKRHILEYEDKQLINVKLGITTREDGLSPYPHNAFNMARYIDDSQQNITKHQEMLATVIGFPREQWVFPIQTHENKVVKVTSNDKGTNIDALNDALHGVDALYTYEPNLLLTMCYADCVPIYFYSEKNHFIGLAHAGWRGTVGQIVNALISNIDFDLNDLNVVIGPATSTSYEINDDIKSKFETLPIDINQYIDTRGTDRHGIDLKRANALLLENAGVPKDNIYITNYATSEDLSLFFSYRVEKGNTGRMLAFIGQ.

Zn(2+) is bound by residues histidine 79, cysteine 124, and histidine 141.

Belongs to the purine nucleoside phosphorylase YfiH/LACC1 family. As to quaternary structure, homodimer. The cofactor is Cu(2+). Zn(2+) is required as a cofactor.

The catalysed reaction is adenosine + phosphate = alpha-D-ribose 1-phosphate + adenine. The enzyme catalyses S-methyl-5'-thioadenosine + phosphate = 5-(methylsulfanyl)-alpha-D-ribose 1-phosphate + adenine. It carries out the reaction inosine + phosphate = alpha-D-ribose 1-phosphate + hypoxanthine. It catalyses the reaction adenosine + H2O + H(+) = inosine + NH4(+). Functionally, purine nucleoside enzyme that catalyzes the phosphorolysis of adenosine and inosine nucleosides, yielding D-ribose 1-phosphate and the respective free bases, adenine and hypoxanthine. Also catalyzes the phosphorolysis of S-methyl-5'-thioadenosine into adenine and S-methyl-5-thio-alpha-D-ribose 1-phosphate. Also has adenosine deaminase activity. The polypeptide is Purine nucleoside phosphorylase SSP1584 (Staphylococcus saprophyticus subsp. saprophyticus (strain ATCC 15305 / DSM 20229 / NCIMB 8711 / NCTC 7292 / S-41)).